We begin with the raw amino-acid sequence, 1195 residues long: EST/SMG-like protein 2 (1195 aa).

3 stretches are compositionally biased toward polar residues: residues 1–10, 18–35, and 55–68; these read MPETSVQNPL, TRSM…SATP, and VLNP…SNSV. Disordered stretches follow at residues 1–38, 55–130, 179–268, and 610–643; these read MPET…PSFP, VLNP…VGIT, SKSE…PASN, and DKKE…DEIM. 2 stretches are compositionally biased toward basic and acidic residues: residues 83–109 and 197–208; these read RFSD…EKNP and INDKDNSARDQD. 2 stretches are compositionally biased toward low complexity: residues 210 to 252 and 619 to 629; these read NNSG…NNSD and NNDSSVTESST. A PINc domain is found at 1025–1164; the sequence is TYFVFDATSW…LISDDDAMKK (140 aa).

In terms of assembly, transiently interacts with PEX14.

The protein localises to the cytoplasm. It is found in the nucleus. The protein resides in the peroxisome. In terms of biological role, may be involved in the regulation of gene expression responses of environment-sensing pathways. This chain is EST/SMG-like protein 2, found in Saccharomyces cerevisiae (strain ATCC 204508 / S288c) (Baker's yeast).